The primary structure comprises 93 residues: Parbolysin P1 (93 aa).

Cystine bridges form between cysteine 16–cysteine 37, cysteine 22–cysteine 33, and cysteine 47–cysteine 60.

Belongs to the worm cytolysin family. Localized within the skin and proboscis and are most readily isolated from body mucus secretions.

It localises to the secreted. Functionally, cytolysin that shows hemolytic activity (on bovine erythrocytes, HC(50)=5.75 mg/ml). This hemolytic activity is completely inhibited by small unilamelar vesicles composed of PC/PG, PC/PI and PC/PS in 1:1 molar ratios (with at least 100 mg/ml concentration). The recombinant protein does not show hemolytic activity, suggesting that it is not properly folded or that it requires a free N-terminal end for its activity. The sequence is that of Parbolysin P1 from Parborlasia corrugatus (Antarctic nemertean worm).